A 581-amino-acid polypeptide reads, in one-letter code: Trehalase (581 aa).

Belongs to the glycosyl hydrolase 15 family. As to quaternary structure, monomer.

It catalyses the reaction alpha,alpha-trehalose + H2O = alpha-D-glucose + beta-D-glucose. The protein operates within glycan degradation; trehalose degradation; D-glucose from alpha,alpha-trehalose: step 1/1. Inhibited by validamycin A. Its function is as follows. Catalyzes the hydrolysis of alpha,alpha-trehalose into two molecules of D-glucose. The chain is Trehalase from Thermoplasma acidophilum (strain ATCC 25905 / DSM 1728 / JCM 9062 / NBRC 15155 / AMRC-C165).